We begin with the raw amino-acid sequence, 380 residues long: Chaperone protein DnaJ (380 aa).

The region spanning Asp-5 to Gly-70 is the J domain. The CR-type zinc-finger motif lies at Gly-139–Gln-217. Cys-152, Cys-155, Cys-169, Cys-172, Cys-191, Cys-194, Cys-205, and Cys-208 together coordinate Zn(2+). CXXCXGXG motif repeat units follow at residues Cys-152–Gly-159, Cys-169–Gly-176, Cys-191–Gly-198, and Cys-205–Gly-212.

Belongs to the DnaJ family. In terms of assembly, homodimer. It depends on Zn(2+) as a cofactor.

The protein resides in the cytoplasm. Participates actively in the response to hyperosmotic and heat shock by preventing the aggregation of stress-denatured proteins and by disaggregating proteins, also in an autonomous, DnaK-independent fashion. Unfolded proteins bind initially to DnaJ; upon interaction with the DnaJ-bound protein, DnaK hydrolyzes its bound ATP, resulting in the formation of a stable complex. GrpE releases ADP from DnaK; ATP binding to DnaK triggers the release of the substrate protein, thus completing the reaction cycle. Several rounds of ATP-dependent interactions between DnaJ, DnaK and GrpE are required for fully efficient folding. Also involved, together with DnaK and GrpE, in the DNA replication of plasmids through activation of initiation proteins. The protein is Chaperone protein DnaJ of Laribacter hongkongensis (strain HLHK9).